A 491-amino-acid chain; its full sequence is Cobyric acid synthase (491 aa).

Residues R246–L432 enclose the GATase cobBQ-type domain. C328 functions as the Nucleophile in the catalytic mechanism. The active site involves H424.

This sequence belongs to the CobB/CobQ family. CobQ subfamily.

It participates in cofactor biosynthesis; adenosylcobalamin biosynthesis. In terms of biological role, catalyzes amidations at positions B, D, E, and G on adenosylcobyrinic A,C-diamide. NH(2) groups are provided by glutamine, and one molecule of ATP is hydrogenolyzed for each amidation. This chain is Cobyric acid synthase, found in Novosphingobium aromaticivorans (strain ATCC 700278 / DSM 12444 / CCUG 56034 / CIP 105152 / NBRC 16084 / F199).